Consider the following 1438-residue polypeptide: DNA polymerase III PolC-type (1438 aa).

The 157-residue stretch at 422–578 (YVVFDVETTG…YDTESTAYIF (157 aa)) folds into the Exonuclease domain.

Belongs to the DNA polymerase type-C family. PolC subfamily.

It localises to the cytoplasm. It carries out the reaction DNA(n) + a 2'-deoxyribonucleoside 5'-triphosphate = DNA(n+1) + diphosphate. In terms of biological role, required for replicative DNA synthesis. This DNA polymerase also exhibits 3' to 5' exonuclease activity. The sequence is that of DNA polymerase III PolC-type from Staphylococcus haemolyticus (strain JCSC1435).